The following is a 375-amino-acid chain: 23S rRNA (uracil(747)-C(5))-methyltransferase RlmC (375 aa).

Residues cysteine 3, cysteine 11, cysteine 14, and cysteine 87 each coordinate [4Fe-4S] cluster. Residues glutamine 212, phenylalanine 241, glutamate 262, and asparagine 307 each contribute to the S-adenosyl-L-methionine site. The active-site Nucleophile is cysteine 334.

Belongs to the class I-like SAM-binding methyltransferase superfamily. RNA M5U methyltransferase family. RlmC subfamily.

It carries out the reaction uridine(747) in 23S rRNA + S-adenosyl-L-methionine = 5-methyluridine(747) in 23S rRNA + S-adenosyl-L-homocysteine + H(+). Catalyzes the formation of 5-methyl-uridine at position 747 (m5U747) in 23S rRNA. The chain is 23S rRNA (uracil(747)-C(5))-methyltransferase RlmC from Escherichia coli (strain SE11).